Consider the following 250-residue polypeptide: Triosephosphate isomerase (250 aa).

9 to 11 (NWK) contributes to the substrate binding site. Histidine 100 serves as the catalytic Electrophile. Glutamate 169 acts as the Proton acceptor in catalysis. Substrate-binding positions include glycine 175, serine 208, and 229–230 (GG).

The protein belongs to the triosephosphate isomerase family. In terms of assembly, homodimer.

The protein resides in the cytoplasm. The catalysed reaction is D-glyceraldehyde 3-phosphate = dihydroxyacetone phosphate. It functions in the pathway carbohydrate biosynthesis; gluconeogenesis. Its pathway is carbohydrate degradation; glycolysis; D-glyceraldehyde 3-phosphate from glycerone phosphate: step 1/1. Its function is as follows. Involved in the gluconeogenesis. Catalyzes stereospecifically the conversion of dihydroxyacetone phosphate (DHAP) to D-glyceraldehyde-3-phosphate (G3P). This is Triosephosphate isomerase from Synechococcus sp. (strain JA-2-3B'a(2-13)) (Cyanobacteria bacterium Yellowstone B-Prime).